Consider the following 258-residue polypeptide: Acyl-[acyl-carrier-protein]--UDP-N-acetylglucosamine O-acyltransferase (258 aa).

The protein belongs to the transferase hexapeptide repeat family. LpxA subfamily. In terms of assembly, homotrimer.

The protein localises to the cytoplasm. The enzyme catalyses a (3R)-hydroxyacyl-[ACP] + UDP-N-acetyl-alpha-D-glucosamine = a UDP-3-O-[(3R)-3-hydroxyacyl]-N-acetyl-alpha-D-glucosamine + holo-[ACP]. The protein operates within glycolipid biosynthesis; lipid IV(A) biosynthesis; lipid IV(A) from (3R)-3-hydroxytetradecanoyl-[acyl-carrier-protein] and UDP-N-acetyl-alpha-D-glucosamine: step 1/6. Involved in the biosynthesis of lipid A, a phosphorylated glycolipid that anchors the lipopolysaccharide to the outer membrane of the cell. The polypeptide is Acyl-[acyl-carrier-protein]--UDP-N-acetylglucosamine O-acyltransferase (Halorhodospira halophila (strain DSM 244 / SL1) (Ectothiorhodospira halophila (strain DSM 244 / SL1))).